Here is a 436-residue protein sequence, read N- to C-terminus: C4-dicarboxylate transport protein 2 (436 aa).

Transmembrane regions (helical) follow at residues 14–34 (VLVA…TAVA), 45–65 (LIKM…IAGM), 77–97 (MALL…LVVV), 142–162 (VVGA…VLFG), 198–218 (PIGA…GSLV), 223–243 (LMLC…GGIA), 290–310 (VVGL…SIYL), 331–351 (ITLL…TGSG), and 353–373 (IVLA…LALI). The disordered stretch occupies residues 414–436 (ELAGEGNASSPASDIPVGGREAV).

Belongs to the dicarboxylate/amino acid:cation symporter (DAACS) (TC 2.A.23) family.

It localises to the cell inner membrane. Its function is as follows. Responsible for the transport of dicarboxylates such as succinate, fumarate, and malate from the periplasm across the membrane. The protein is C4-dicarboxylate transport protein 2 of Pseudomonas aeruginosa (strain UCBPP-PA14).